We begin with the raw amino-acid sequence, 468 residues long: Cysteine--tRNA ligase (468 aa).

Cysteine 33 lines the Zn(2+) pocket. Positions alanine 35–histidine 45 match the 'HIGH' region motif. Zn(2+)-binding residues include cysteine 211, histidine 236, and glutamate 240. A 'KMSKS' region motif is present at residues lysine 267 to serine 271. Residue lysine 270 coordinates ATP.

It belongs to the class-I aminoacyl-tRNA synthetase family. Monomer. Requires Zn(2+) as cofactor.

The protein localises to the cytoplasm. It catalyses the reaction tRNA(Cys) + L-cysteine + ATP = L-cysteinyl-tRNA(Cys) + AMP + diphosphate. This Mycobacterium marinum (strain ATCC BAA-535 / M) protein is Cysteine--tRNA ligase.